A 292-amino-acid polypeptide reads, in one-letter code: Elongation factor Ts (292 aa).

Residues 80 to 83 (TDFV) are involved in Mg(2+) ion dislocation from EF-Tu.

The protein belongs to the EF-Ts family.

It is found in the cytoplasm. Associates with the EF-Tu.GDP complex and induces the exchange of GDP to GTP. It remains bound to the aminoacyl-tRNA.EF-Tu.GTP complex up to the GTP hydrolysis stage on the ribosome. In Oenococcus oeni (strain ATCC BAA-331 / PSU-1), this protein is Elongation factor Ts.